The chain runs to 183 residues: CKLF-like MARVEL transmembrane domain-containing protein 6 (183 aa).

Residue Met1 is modified to N-acetylmethionine. Residues 1–39 (MENGAVYSPTTEEDPGPARGPRSGLAAYFFMGRLPLLRR) are Cytoplasmic-facing. Ser8 is modified (phosphoserine). The region spanning 33 to 160 (RLPLLRRVLK…DFITMLYEKR (128 aa)) is the MARVEL domain. Residues 40–60 (VLKGLQLLLSLLAFICEEVVS) form a helical membrane-spanning segment. Residues 61–67 (QCTLCGG) are Extracellular-facing. Residues 68 to 88 (LYFFEFVSCSAFLLSLLILIV) form a helical membrane-spanning segment. At 89–106 (YCTPFYERVDTTKVKSSD) the chain is on the cytoplasmic side. The helical transmembrane segment at 107–127 (FYITLGTGCVFLLASIIFVST) threads the bilayer. Residues 128–134 (HDRTSAE) are Extracellular-facing. Residues 135–155 (IAAIVFGFIASFMFLLDFITM) traverse the membrane as a helical segment. Residues 156 to 183 (LYEKRQESQLRKPENTTRAEALTEPLNA) lie on the Cytoplasmic side of the membrane. At Thr171 the chain carries Phosphothreonine.

It belongs to the chemokine-like factor family. In terms of assembly, interacts with PD-L1/CD274 (via transmembrane domain); the interaction is direct. Interacts with CMTM4. Interacts with CD58, ARG1, ENO1 and TMPO. In terms of tissue distribution, expressed in the leukocytes, placenta and testis.

Its subcellular location is the cell membrane. The protein localises to the early endosome membrane. It localises to the recycling endosome membrane. In terms of biological role, master regulator of recycling and plasma membrane expression of PD-L1/CD274, an immune inhibitory ligand critical for immune tolerance to self and antitumor immunity. Associates with both constitutive and IFNG-induced PD-L1/CD274 at recycling endosomes, where it protects PD-L1/CD274 from being targeted for lysosomal degradation, likely by preventing its STUB1-mediated ubiquitination. May stabilize PD-L1/CD274 expression on antigen presenting cells and potentiates inhibitory signaling by PDCD1/CD279, its receptor on T-cells, ultimately triggering T-cell anergy. The protein is CKLF-like MARVEL transmembrane domain-containing protein 6 of Homo sapiens (Human).